The primary structure comprises 426 residues: UDP-N-acetylglucosamine 1-carboxyvinyltransferase (426 aa).

22 to 23 provides a ligand contact to phosphoenolpyruvate; sequence KN. Residue Arg94 participates in UDP-N-acetyl-alpha-D-glucosamine binding. Cys118 (proton donor) is an active-site residue. 2-(S-cysteinyl)pyruvic acid O-phosphothioketal is present on Cys118. UDP-N-acetyl-alpha-D-glucosamine is bound by residues 123 to 127, Asp310, and Ile332; that span reads RPVDL.

The protein belongs to the EPSP synthase family. MurA subfamily.

The protein localises to the cytoplasm. The catalysed reaction is phosphoenolpyruvate + UDP-N-acetyl-alpha-D-glucosamine = UDP-N-acetyl-3-O-(1-carboxyvinyl)-alpha-D-glucosamine + phosphate. It functions in the pathway cell wall biogenesis; peptidoglycan biosynthesis. Its function is as follows. Cell wall formation. Adds enolpyruvyl to UDP-N-acetylglucosamine. The protein is UDP-N-acetylglucosamine 1-carboxyvinyltransferase of Hyphomonas neptunium (strain ATCC 15444).